We begin with the raw amino-acid sequence, 138 residues long: Putative pre-16S rRNA nuclease (138 aa).

This sequence belongs to the YqgF nuclease family.

It localises to the cytoplasm. Functionally, could be a nuclease involved in processing of the 5'-end of pre-16S rRNA. The polypeptide is Putative pre-16S rRNA nuclease (Bacteroides thetaiotaomicron (strain ATCC 29148 / DSM 2079 / JCM 5827 / CCUG 10774 / NCTC 10582 / VPI-5482 / E50)).